Here is a 371-residue protein sequence, read N- to C-terminus: Cytochrome b (371 aa).

4 helical membrane-spanning segments follow: residues 25 to 45 (FGSM…FLAI), 69 to 90 (WIMQ…YTHI), 105 to 125 (WLSG…GYVL), and 170 to 190 (FFAL…IHII). Residues His75 and His89 each coordinate heme b. Heme b contacts are provided by His174 and His188. His193 contributes to the a ubiquinone binding site. The next 4 helical transmembrane spans lie at 218 to 238 (YKDT…LSFT), 280 to 300 (LGGT…PFTH), 312 to 332 (LAQT…WTAS), and 339 to 358 (FIII…IMNP).

This sequence belongs to the cytochrome b family. As to quaternary structure, the cytochrome bc1 complex contains 3 respiratory subunits (MT-CYB, CYC1 and UQCRFS1), 2 core proteins (UQCRC1 and UQCRC2) and probably 6 low-molecular weight proteins. Heme b serves as cofactor.

The protein localises to the mitochondrion inner membrane. In terms of biological role, component of the ubiquinol-cytochrome c reductase complex (complex III or cytochrome b-c1 complex) that is part of the mitochondrial respiratory chain. The b-c1 complex mediates electron transfer from ubiquinol to cytochrome c. Contributes to the generation of a proton gradient across the mitochondrial membrane that is then used for ATP synthesis. This Sinomicrurus macclellandi (Macclelland's coral snake) protein is Cytochrome b (MT-CYB).